We begin with the raw amino-acid sequence, 219 residues long: Small ribosomal subunit protein uS3 (219 aa).

In terms of domain architecture, KH type-2 spans 38-106 (IRKYINTKLA…KVHINIVEIK (69 aa)).

It belongs to the universal ribosomal protein uS3 family. Part of the 30S ribosomal subunit. Forms a tight complex with proteins S10 and S14.

Functionally, binds the lower part of the 30S subunit head. Binds mRNA in the 70S ribosome, positioning it for translation. In Latilactobacillus sakei subsp. sakei (strain 23K) (Lactobacillus sakei subsp. sakei), this protein is Small ribosomal subunit protein uS3.